A 340-amino-acid polypeptide reads, in one-letter code: MKRIAVLTSGGDAPGMNAAIRAVVRKAISEGIEVYGINHGYAGMVAGDIFPLTSASVGDKIGRGGTFLYSARYPEFAQVEGQLAGIEQLKKFGIEGVVVIGGDGSYHGAMRLTEHGFPAVGLPGTIDNDIVGTDFTIGFDTAVSTVVDALDKIRDTSSSHNRTFVVEVMGRNAGDIALNAGIAAGADDISIPELEFKFENVVNNINKGYEKGKNHHIIIVAEGVMTGEEFATKLKEAGYKGDLRVSVLGHIQRGGSPTARDRVLASRMGARAVELLRDGIGGVAVGIRNEELVESPILGTAEEGALFSLTTEGGIKVNNPHKAGLELYRLNSALNNLNLN.

G11 lines the ATP pocket. 21-25 is a binding site for ADP; it reads RAVVR. ATP is bound by residues 72-73 and 102-105; these read RY and GDGS. Residue D103 coordinates Mg(2+). 125–127 provides a ligand contact to substrate; sequence TID. The active-site Proton acceptor is the D127. Residue R154 participates in ADP binding. Substrate is bound by residues R162 and 169-171; that span reads MGR. Residues 185-187, K211, and 213-215 each bind ADP; these read GAD and KNH. Substrate contacts are provided by residues E222, R244, and 250-253; that span reads HIQR.

It belongs to the phosphofructokinase type A (PFKA) family. ATP-dependent PFK group I subfamily. Prokaryotic clade 'B1' sub-subfamily. Homotetramer. Mg(2+) serves as cofactor.

Its subcellular location is the cytoplasm. It carries out the reaction beta-D-fructose 6-phosphate + ATP = beta-D-fructose 1,6-bisphosphate + ADP + H(+). Its pathway is carbohydrate degradation; glycolysis; D-glyceraldehyde 3-phosphate and glycerone phosphate from D-glucose: step 3/4. With respect to regulation, allosterically activated by ADP and other diphosphonucleosides, and allosterically inhibited by phosphoenolpyruvate. In terms of biological role, catalyzes the phosphorylation of D-fructose 6-phosphate to fructose 1,6-bisphosphate by ATP, the first committing step of glycolysis. The sequence is that of ATP-dependent 6-phosphofructokinase from Lactococcus lactis subsp. lactis (Streptococcus lactis).